We begin with the raw amino-acid sequence, 153 residues long: Large ribosomal subunit protein uL30 (153 aa).

This sequence belongs to the universal ribosomal protein uL30 family. Part of the 50S ribosomal subunit.

The protein is Large ribosomal subunit protein uL30 of Methanoculleus marisnigri (strain ATCC 35101 / DSM 1498 / JR1).